A 276-amino-acid polypeptide reads, in one-letter code: Pantothenate synthetase (276 aa).

Residue 27–34 coordinates ATP; the sequence is MGALHKGH. The active-site Proton donor is histidine 34. (R)-pantoate is bound at residue glutamine 58. Position 58 (glutamine 58) interacts with beta-alanine. 147–150 serves as a coordination point for ATP; the sequence is GKKD. Glutamine 153 contributes to the (R)-pantoate binding site. ATP contacts are provided by residues valine 176 and 184-187; that span reads LSSR.

This sequence belongs to the pantothenate synthetase family. Homodimer.

It localises to the cytoplasm. It carries out the reaction (R)-pantoate + beta-alanine + ATP = (R)-pantothenate + AMP + diphosphate + H(+). The protein operates within cofactor biosynthesis; (R)-pantothenate biosynthesis; (R)-pantothenate from (R)-pantoate and beta-alanine: step 1/1. In terms of biological role, catalyzes the condensation of pantoate with beta-alanine in an ATP-dependent reaction via a pantoyl-adenylate intermediate. In Helicobacter acinonychis (strain Sheeba), this protein is Pantothenate synthetase.